Here is a 205-residue protein sequence, read N- to C-terminus: GTP cyclohydrolase-2 (205 aa).

Residue 49-53 participates in GTP binding; the sequence is RLHSE. Residues Cys54, Cys65, and Cys67 each coordinate Zn(2+). Residues Gln70, 92–94, and Thr114 each bind GTP; that span reads EGR. The active-site Proton acceptor is Asp126. The active-site Nucleophile is Arg128. Positions 149 and 154 each coordinate GTP.

It belongs to the GTP cyclohydrolase II family. Requires Zn(2+) as cofactor.

It carries out the reaction GTP + 4 H2O = 2,5-diamino-6-hydroxy-4-(5-phosphoribosylamino)-pyrimidine + formate + 2 phosphate + 3 H(+). The protein operates within cofactor biosynthesis; riboflavin biosynthesis; 5-amino-6-(D-ribitylamino)uracil from GTP: step 1/4. Functionally, catalyzes the conversion of GTP to 2,5-diamino-6-ribosylamino-4(3H)-pyrimidinone 5'-phosphate (DARP), formate and pyrophosphate. The protein is GTP cyclohydrolase-2 of Pseudomonas putida (strain W619).